We begin with the raw amino-acid sequence, 364 residues long: UDP-N-acetylglucosamine--N-acetylmuramyl-(pentapeptide) pyrophosphoryl-undecaprenol N-acetylglucosamine transferase 1 (364 aa).

Residues 10–12 (TGG), Asn-124, Ser-195, Ile-250, and Gln-295 contribute to the UDP-N-acetyl-alpha-D-glucosamine site.

The protein belongs to the glycosyltransferase 28 family. MurG subfamily.

It localises to the cell membrane. It carries out the reaction di-trans,octa-cis-undecaprenyl diphospho-N-acetyl-alpha-D-muramoyl-L-alanyl-D-glutamyl-meso-2,6-diaminopimeloyl-D-alanyl-D-alanine + UDP-N-acetyl-alpha-D-glucosamine = di-trans,octa-cis-undecaprenyl diphospho-[N-acetyl-alpha-D-glucosaminyl-(1-&gt;4)]-N-acetyl-alpha-D-muramoyl-L-alanyl-D-glutamyl-meso-2,6-diaminopimeloyl-D-alanyl-D-alanine + UDP + H(+). The protein operates within cell wall biogenesis; peptidoglycan biosynthesis. In terms of biological role, cell wall formation. Catalyzes the transfer of a GlcNAc subunit on undecaprenyl-pyrophosphoryl-MurNAc-pentapeptide (lipid intermediate I) to form undecaprenyl-pyrophosphoryl-MurNAc-(pentapeptide)GlcNAc (lipid intermediate II). The chain is UDP-N-acetylglucosamine--N-acetylmuramyl-(pentapeptide) pyrophosphoryl-undecaprenol N-acetylglucosamine transferase 1 from Bacillus cereus (strain ATCC 10987 / NRS 248).